Reading from the N-terminus, the 1569-residue chain is Zinc finger protein GLI3 (1569 aa).

Polar residues-rich tracts occupy residues 1-10 (MEAQSRSTTA) and 416-432 (AAQQNKPTSESAVSSTG). Disordered stretches follow at residues 1–79 (MEAQ…STSS) and 414–461 (SEAA…DQPD). 5 consecutive C2H2-type zinc fingers follow at residues 485–510 (TNCHWEGCSREFDTQEQLVHHINNDH), 518–545 (FVCRWLDCSREQKPFKAQYMLVVHMRRH), 551–575 (HKCTFEGCSKAYSRLENLKTHLRSH), 581–606 (YVCEHEGCNKAFSNASDRAKHQNRTH), and 612–637 (YVCKIPGCTKRYTDPSSLRKHVKTVH). Disordered regions lie at residues 625–731 (DPSS…YTNS), 899–921 (SYDPISTDASRRSSETSQCDGLP), 1202–1228 (PKSGLSQQRGYQHHTQNNPQAPQQNLD), and 1335–1364 (SNQTTSGQNGNTTDGTRSFLSTTQNGGEQQ). Basic and acidic residues predominate over residues 637–653 (HGPEAHVTKKQRGDIHP). The segment covering 663–676 (SHSQSRSPGQQTQG) has biased composition (polar residues). The segment covering 678-704 (HGEHKDLSNTTSKHEECLQVRSVKTEK) has biased composition (basic and acidic residues). Residues 705–731 (PMSSQPSPGGKSSCSRQQSPISNYTNS) show a composition bias toward polar residues. The segment covering 1335-1350 (SNQTTSGQNGNTTDGT) has biased composition (low complexity). Residues 1352-1364 (SFLSTTQNGGEQQ) are compositionally biased toward polar residues.

It belongs to the GLI C2H2-type zinc-finger protein family. In terms of processing, phosphorylation is essential for its proteolytic processing. The repressor form (GLI3R), a C-terminally truncated form is generated from the full-length GLI3 protein (GLI3FL) through proteolytic processing.

It localises to the nucleus. It is found in the cytoplasm. Functionally, has a dual function as a transcriptional activator and a repressor of the sonic hedgehog (Shh) pathway, and may play a role in limb development. May bind to the minimal GLI-consensus sequence 5'-GGGTGGTC-3'. Has an essential role in the early embryonic patterning of mesoderm and neuroectoderm. The protein is Zinc finger protein GLI3 (gli3) of Xenopus laevis (African clawed frog).